The sequence spans 594 residues: Ferredoxin--nitrite reductase, chloroplastic (594 aa).

The N-terminal 32 residues, 1–32, are a transit peptide targeting the chloroplast; it reads MASLPVNKIIPSSTTLLSSSNNNRRRNNSSIR. Residues 13–22 are compositionally biased toward low complexity; the sequence is STTLLSSSNN. Positions 13-36 are disordered; that stretch reads STTLLSSSNNNRRRNNSSIRCQKA. [4Fe-4S] cluster is bound by residues Cys-473, Cys-479, Cys-514, and Cys-518. Cys-518 provides a ligand contact to siroheme.

Belongs to the nitrite and sulfite reductase 4Fe-4S domain family. In terms of assembly, monomer. It depends on siroheme as a cofactor. [4Fe-4S] cluster serves as cofactor.

The protein localises to the plastid. It is found in the chloroplast. The enzyme catalyses 6 oxidized [2Fe-2S]-[ferredoxin] + NH4(+) + 2 H2O = nitrite + 6 reduced [2Fe-2S]-[ferredoxin] + 8 H(+). Its pathway is nitrogen metabolism; nitrate reduction (assimilation). The polypeptide is Ferredoxin--nitrite reductase, chloroplastic (NIR) (Spinacia oleracea (Spinach)).